The chain runs to 424 residues: Probable methyltransferase EP424R (424 aa).

Residues 104–316 (QIVTNAWLKM…TYIVGKNRLR (213 aa)) form the Adrift-type SAM-dependent 2'-O-MTase domain. G136 and D229 together coordinate S-adenosyl-L-methionine. The Proton acceptor role is filled by K269.

The protein localises to the virion. This chain is Probable methyltransferase EP424R, found in African swine fever virus (strain Badajoz 1971 Vero-adapted) (Ba71V).